The primary structure comprises 832 residues: Putative beta-glucosidase (832 aa).

D225 is a catalytic residue. Residues 397 to 556 (TGKHGYVAKF…DPETEIDYAV (160 aa)) form the PA14 domain.

It belongs to the glycosyl hydrolase 3 family.

It is found in the cytoplasm. The catalysed reaction is Hydrolysis of terminal, non-reducing beta-D-glucosyl residues with release of beta-D-glucose.. In Schizosaccharomyces pombe (strain 972 / ATCC 24843) (Fission yeast), this protein is Putative beta-glucosidase.